The chain runs to 342 residues: 4-hydroxythreonine-4-phosphate dehydrogenase (342 aa).

Positions 140 and 141 each coordinate substrate. A divalent metal cation contacts are provided by histidine 175, histidine 220, and histidine 275. Substrate-binding residues include lysine 283, asparagine 292, and arginine 301.

The protein belongs to the PdxA family. Homodimer. Zn(2+) is required as a cofactor. The cofactor is Mg(2+). Co(2+) serves as cofactor.

The protein localises to the cytoplasm. The catalysed reaction is 4-(phosphooxy)-L-threonine + NAD(+) = 3-amino-2-oxopropyl phosphate + CO2 + NADH. It functions in the pathway cofactor biosynthesis; pyridoxine 5'-phosphate biosynthesis; pyridoxine 5'-phosphate from D-erythrose 4-phosphate: step 4/5. In terms of biological role, catalyzes the NAD(P)-dependent oxidation of 4-(phosphooxy)-L-threonine (HTP) into 2-amino-3-oxo-4-(phosphooxy)butyric acid which spontaneously decarboxylates to form 3-amino-2-oxopropyl phosphate (AHAP). The chain is 4-hydroxythreonine-4-phosphate dehydrogenase from Rhizobium meliloti (strain 1021) (Ensifer meliloti).